Reading from the N-terminus, the 314-residue chain is Malate dehydrogenase (314 aa).

Residues 11 to 16 (GSGNIG) and aspartate 35 contribute to the NAD(+) site. Arginine 84 and arginine 90 together coordinate substrate. NAD(+)-binding positions include asparagine 97 and 120–122 (ITN). Asparagine 122 and arginine 153 together coordinate substrate. The active-site Proton acceptor is histidine 177.

The protein belongs to the LDH/MDH superfamily. MDH type 3 family.

The catalysed reaction is (S)-malate + NAD(+) = oxaloacetate + NADH + H(+). In terms of biological role, catalyzes the reversible oxidation of malate to oxaloacetate. The protein is Malate dehydrogenase of Rickettsia bellii (strain RML369-C).